We begin with the raw amino-acid sequence, 512 residues long: 2-isopropylmalate synthase (512 aa).

Residues 4–266 form the Pyruvate carboxyltransferase domain; the sequence is IEIFDTTLRD…TTKLNLKEIA (263 aa). Mn(2+)-binding residues include Asp-13, His-201, His-203, and Asn-237. The segment at 390–512 is regulatory domain; sequence QLESVQLAYG…GEPTPVSATI (123 aa).

Belongs to the alpha-IPM synthase/homocitrate synthase family. LeuA type 1 subfamily. As to quaternary structure, homodimer. Mn(2+) is required as a cofactor.

Its subcellular location is the cytoplasm. It catalyses the reaction 3-methyl-2-oxobutanoate + acetyl-CoA + H2O = (2S)-2-isopropylmalate + CoA + H(+). The protein operates within amino-acid biosynthesis; L-leucine biosynthesis; L-leucine from 3-methyl-2-oxobutanoate: step 1/4. Its function is as follows. Catalyzes the condensation of the acetyl group of acetyl-CoA with 3-methyl-2-oxobutanoate (2-ketoisovalerate) to form 3-carboxy-3-hydroxy-4-methylpentanoate (2-isopropylmalate). This Brevibacillus brevis (strain 47 / JCM 6285 / NBRC 100599) protein is 2-isopropylmalate synthase.